Reading from the N-terminus, the 182-residue chain is Ribosome-recycling factor (182 aa).

Belongs to the RRF family.

It localises to the cytoplasm. Responsible for the release of ribosomes from messenger RNA at the termination of protein biosynthesis. May increase the efficiency of translation by recycling ribosomes from one round of translation to another. The protein is Ribosome-recycling factor of Cyanothece sp. (strain PCC 7425 / ATCC 29141).